The primary structure comprises 364 residues: Cobalt-precorrin-5B C(1)-methyltransferase (364 aa).

Belongs to the CbiD family.

It carries out the reaction Co-precorrin-5B + S-adenosyl-L-methionine = Co-precorrin-6A + S-adenosyl-L-homocysteine. Its pathway is cofactor biosynthesis; adenosylcobalamin biosynthesis; cob(II)yrinate a,c-diamide from sirohydrochlorin (anaerobic route): step 6/10. Its function is as follows. Catalyzes the methylation of C-1 in cobalt-precorrin-5B to form cobalt-precorrin-6A. This is Cobalt-precorrin-5B C(1)-methyltransferase from Pseudomonas putida (strain W619).